Reading from the N-terminus, the 658-residue chain is Probable Xaa-Pro aminopeptidase P (658 aa).

Residues D449, D460, E558, and E572 each coordinate Mn(2+).

This sequence belongs to the peptidase M24B family. Mn(2+) is required as a cofactor.

The enzyme catalyses Release of any N-terminal amino acid, including proline, that is linked to proline, even from a dipeptide or tripeptide.. Its function is as follows. Catalyzes the removal of a penultimate prolyl residue from the N-termini of peptides. The protein is Probable Xaa-Pro aminopeptidase P (ampp) of Aspergillus clavatus (strain ATCC 1007 / CBS 513.65 / DSM 816 / NCTC 3887 / NRRL 1 / QM 1276 / 107).